A 192-amino-acid chain; its full sequence is Adenylate kinase (192 aa).

12-17 lines the ATP pocket; that stretch reads GSGKTT. The tract at residues 34 to 63 is NMP; that stretch reads STGDLLRAEVASGSELGKTIDSFISKGNLV. AMP-binding positions include Thr35, Arg40, 61 to 63, 88 to 91, and Gln95; these read NLV and GYPR. Residues 130–136 are LID; it reads GRNRGAD. Arg131 contributes to the ATP binding site. Residues Arg133 and Arg145 each contribute to the AMP site. Arg173 is an ATP binding site.

It belongs to the adenylate kinase family. As to quaternary structure, monomer.

The protein localises to the cytoplasm. It catalyses the reaction AMP + ATP = 2 ADP. It participates in purine metabolism; AMP biosynthesis via salvage pathway; AMP from ADP: step 1/1. Functionally, catalyzes the reversible transfer of the terminal phosphate group between ATP and AMP. Plays an important role in cellular energy homeostasis and in adenine nucleotide metabolism. This Campylobacter jejuni subsp. jejuni serotype O:2 (strain ATCC 700819 / NCTC 11168) protein is Adenylate kinase.